Reading from the N-terminus, the 436-residue chain is 2-aminohexano-6-lactam racemase (436 aa).

Pyridoxal 5'-phosphate contacts are provided by residues 110-111 (GS), Tyr-137, and 238-241 (DEVK). Residue Tyr-137 is part of the active site. Lys-267 is subject to N6-(pyridoxal phosphate)lysine. Thr-295 contributes to the pyridoxal 5'-phosphate binding site.

Belongs to the class-III pyridoxal-phosphate-dependent aminotransferase family. In terms of assembly, monomer. The cofactor is pyridoxal 5'-phosphate.

It catalyses the reaction L-2-aminohexano-6-lactam = D-2-aminohexano-6-lactam. Functionally, catalyzes the interconversion of L-alpha-amino-epsilon-caprolactam and D-alpha-amino-epsilon-caprolactam. The sequence is that of 2-aminohexano-6-lactam racemase from Achromobacter obae.